A 217-amino-acid chain; its full sequence is MNIKDEHIDSVCSLLDQLVGNVSFKNLFTGYGLFHKEETMFAIWQNKKLYLRGEGVLAIQLTKLGCEPFTTNELNKRFVLSQYYALSDQILRSNRLCRKLIILSIKQILEQKLECTLRKLNRLKDLPNLTIKHERALIKVGITNVAMLREIGAENALVELKKSGSGATLDFYWKLVCALQNKNSQMLSQAEKERLLKKLNEVWRKNGLKGYRKLDDE.

It belongs to the Sxy/TfoX family.

In terms of biological role, required for DNA transformation. Positively regulates genes required for DNA transformation (late competence-specific genes) in association with CRP. Required for expression of the late competence-specific gene, com101A. Required for expression of the dprABC operon. The protein is DNA transformation protein TfoX of Haemophilus influenzae (strain ATCC 51907 / DSM 11121 / KW20 / Rd).